The following is a 589-amino-acid chain: MSVSVHENRKSRASSGSINIYLFHKSSYADSVLTHLNLLRQQRLFTDVLLHAGNRTFPCHRAVLAACSRYFEAMFSGGLKESQDSEVNFDNSIHPEVLELLLDYAYSSRVIINEENAESLLEAGDMLEFQDIRDACAEFLEKNLHPTNCLGMLLLSDAHQCTKLYELSWRMCLSNFQTIRKNEDFLQLPQDMVVQLLSSEELETEDERLVYESAINWISYDLKKRYCYLPELLQTVRLALLPAIYLMENVAMEELITKQRKSKEIVEEAIRCKLKILQNDGVVTSLCARPRKTGHALFLLGGQTFMCDKLYLVDQKAKEIIPKADIPSPRKEFSACAIGCKVYITGGRGSENGVSKDVWVYDTLHEEWSKAAPMLVARFGHGSAELKHCLYVVGGHTAATGCLPASPSVSLKQVEHYDPTINKWTMVAPLREGVSNAAVVSAKLKLFAFGGTSVSHDKLPKVQCYDQCENRWTVPATCPQPWRYTAAAVLGNQIFIMGGDTEFSACSAYKFNSETYQWTKVGDVTAKRMSCHAVASGNKLYVVGGYFGIQRCKTLDCYDPTLDVWNSITTVPYSLIPTAFVSTWKHLPS.

The BTB domain occupies Thr46–Glu114. 6 Kelch repeats span residues Ala296–Cys340, Lys341–His388, Cys389–Leu444, Leu446–Asn492, Ile494–Asn538, and Lys539–Lys585.

In terms of assembly, binds to RB1. Hypophosphorylated RB1 associates with ENC1 during neuronal differentiation, while hyperphosphorylated RB1 associates with ENC1 in undifferentiating cells. Part of a complex that contains CUL3, RBX1 and ENC1. Interacts indirectly with KEAP1. In terms of processing, ubiquitinated by E3 ubiquitin ligase complex formed by CUL3 and RBX1 and probably targeted for proteasome-independent degradation. Quinone-induced oxidative stress increases its ubiquitination. Detected in fetal brain tissue, moderate expression in fetal heart, lung and kidney. Highly expressed in adult brain, particularly high in the hippocampus and amygdala, and spinal cord. Detectable in adult pancreas. May be down-regulated in neuroblastoma tumors.

Its subcellular location is the nucleus matrix. The protein localises to the cytoplasm. It localises to the cytoskeleton. Its function is as follows. Actin-binding protein involved in the regulation of neuronal process formation and in differentiation of neural crest cells. Down-regulates transcription factor NF2L2/NRF2 by decreasing the rate of protein synthesis and not via a ubiquitin-mediated proteasomal degradation mechanism. This is Ectoderm-neural cortex protein 1 (ENC1) from Homo sapiens (Human).